The following is an 80-amino-acid chain: FXYD domain-containing ion transport regulator 7 (80 aa).

At 1–23 (MATPTQTPTKAPEEPDPFYYDYN) the chain is on the extracellular side. T3, T5, and T9 each carry an O-linked (GlcNAc) threonine glycan. A helical membrane pass occupies residues 24–46 (TVQTVGMTLATILFLLGILIVIS). Topologically, residues 47 to 80 (KKVKCRKADSRSESPTCKSCKSELPSSAPGGGGV) are cytoplasmic. The disordered stretch occupies residues 54–80 (ADSRSESPTCKSCKSELPSSAPGGGGV). S73 is subject to Phosphoserine.

Belongs to the FXYD family. Regulatory subunit of the sodium/potassium-transporting ATPase which is composed of a catalytic alpha subunit, a non-catalytic beta subunit and a FXYD regulatory unit that modulates the enzymatic activity in a tissue- and isoform-specific way by changing affinities of the Na+/K+-ATPase toward Na(+), K(+) or ATP. In terms of processing, O-glycosylated; required for stabilization and translocation to the plasma membrane.

It localises to the cell membrane. In terms of biological role, associates with and regulates the activity of the sodium/potassium-transporting ATPase (NKA) which catalyzes the hydrolysis of ATP coupled with the exchange of Na(+) and K(+) ions across the plasma membrane. Reduces the apparent affinity for external K(+), an effect that depends on the presence of external Na(+) and voltage. Increases the apparent affinity for intracellular Na(+). The sequence is that of FXYD domain-containing ion transport regulator 7 (FXYD7) from Homo sapiens (Human).